A 494-amino-acid polypeptide reads, in one-letter code: Ectonucleoside triphosphate diphosphohydrolase 8 (494 aa).

Residues 1 to 8 (MRLSWKER) lie on the Cytoplasmic side of the membrane. A helical membrane pass occupies residues 9–29 (VFMVLLGVAAASGLTMLILIL). Over 30-465 (VKATNVLLPA…LTQWRAQSYS (436 aa)) the chain is Extracellular. An intrachain disulfide couples Cys78 to Cys102. The active-site Proton acceptor is the Glu168. Cys245 and Cys291 form a disulfide bridge. N-linked (GlcNAc...) asparagine glycosylation is found at Asn299 and Asn303. Cys328 and Cys334 are oxidised to a cystine. Residue Asn362 is glycosylated (N-linked (GlcNAc...) asparagine). The cysteines at positions 380 and 402 are disulfide-linked. A helical membrane pass occupies residues 466 to 486 (IWIAGVVFAVLTLVAILGAAA). The Cytoplasmic segment spans residues 487 to 494 (VQLFWTQD).

The protein belongs to the GDA1/CD39 NTPase family. Ca(2+) is required as a cofactor. Mg(2+) serves as cofactor. N-glycosylated. Present in liver, and at lower level in jejunum and kidney. Limited to the canalicular domain of hepatocytes (at protein level).

It localises to the cell membrane. The catalysed reaction is a ribonucleoside 5'-triphosphate + 2 H2O = a ribonucleoside 5'-phosphate + 2 phosphate + 2 H(+). Functionally, canalicular ectonucleoside NTPDase responsible for the main hepatic NTPDase activity. Ectonucleoside NTPDases catalyze the hydrolysis of gamma- and beta-phosphate residues of nucleotides, playing a central role in concentration of extracellular nucleotides. Has activity toward ATP, ADP, UTP and UDP, but not toward AMP. In Rattus norvegicus (Rat), this protein is Ectonucleoside triphosphate diphosphohydrolase 8 (Entpd8).